We begin with the raw amino-acid sequence, 462 residues long: MRLLDSATKEKIKLDKKDISIYLCGPTVYDDAHLGHARSSVCFDLLRRVLLANGNRVKFARNYTDIDDKILKKMAQSCQTLEEITEFYIKSYEEDMRTLNVLDPDFKPRATHYIIAMLDLIKKLAKDGFVYTLEDGIYFDTSKDEKYLSLSSRNLEENISRLSNEVQKRNESDFVLWKFDENFYESEFGKGRPGWHTECVAMIDSIFENTLDIHAGGIDLLFPHHENEAAQCRCGCKRKLANIWLHNGFVKIDGEKMSKSLNNSFFIKDALKEFMGEALRFYLLSSHYRSHFNYSLSDLENAKKRLDKIYRLKKRLDLGEISDFDVLNDIEIKSEIAKQILEILNDDLNISKALALLDDFISNANLELDKESKNKILKQNIKEALSELAKIFGFGFMDATLYFQWGVSKEEREEIEKLILERTEAKKNKDFNTADAIREQLSSKKITLLDTPNGTIWEKMNA.

Cys-24 lines the Zn(2+) pocket. The 'HIGH' region motif lies at 26–36; it reads PTVYDDAHLGH. Zn(2+) is bound by residues Cys-199, His-224, and Glu-228. The short motif at 256–260 is the 'KMSKS' region element; that stretch reads KMSKS. An ATP-binding site is contributed by Lys-259.

This sequence belongs to the class-I aminoacyl-tRNA synthetase family. Monomer. It depends on Zn(2+) as a cofactor.

Its subcellular location is the cytoplasm. The catalysed reaction is tRNA(Cys) + L-cysteine + ATP = L-cysteinyl-tRNA(Cys) + AMP + diphosphate. The chain is Cysteine--tRNA ligase from Campylobacter jejuni subsp. doylei (strain ATCC BAA-1458 / RM4099 / 269.97).